A 33-amino-acid chain; its full sequence is Photosystem II reaction center protein T (33 aa).

The helical transmembrane segment at 3–23 (ALVYTFLLVSTLGIIFFAIFF) threads the bilayer.

Belongs to the PsbT family. As to quaternary structure, PSII is composed of 1 copy each of membrane proteins PsbA, PsbB, PsbC, PsbD, PsbE, PsbF, PsbH, PsbI, PsbJ, PsbK, PsbL, PsbM, PsbT, PsbY, PsbZ, Psb30/Ycf12, at least 3 peripheral proteins of the oxygen-evolving complex and a large number of cofactors. It forms dimeric complexes.

It localises to the plastid. The protein resides in the chloroplast thylakoid membrane. Functionally, found at the monomer-monomer interface of the photosystem II (PS II) dimer, plays a role in assembly and dimerization of PSII. PSII is a light-driven water plastoquinone oxidoreductase, using light energy to abstract electrons from H(2)O, generating a proton gradient subsequently used for ATP formation. The polypeptide is Photosystem II reaction center protein T (Helianthus annuus (Common sunflower)).